An 885-amino-acid chain; its full sequence is Alanine--tRNA ligase (885 aa).

The Zn(2+) site is built by H574, H578, C676, and H680.

The protein belongs to the class-II aminoacyl-tRNA synthetase family. Zn(2+) serves as cofactor.

It is found in the cytoplasm. The catalysed reaction is tRNA(Ala) + L-alanine + ATP = L-alanyl-tRNA(Ala) + AMP + diphosphate. Its function is as follows. Catalyzes the attachment of alanine to tRNA(Ala) in a two-step reaction: alanine is first activated by ATP to form Ala-AMP and then transferred to the acceptor end of tRNA(Ala). Also edits incorrectly charged Ser-tRNA(Ala) and Gly-tRNA(Ala) via its editing domain. The sequence is that of Alanine--tRNA ligase from Syntrophobacter fumaroxidans (strain DSM 10017 / MPOB).